Here is a 553-residue protein sequence, read N- to C-terminus: Undecaprenyl phosphate-alpha-4-amino-4-deoxy-L-arabinose arabinosyl transferase (553 aa).

The next 11 helical transmembrane spans lie at 6–26 (ACKV…LLPL), 89–109 (FGSV…AMMM), 115–135 (IAFA…IGTY), 180–200 (FMTK…PIVI), 208–228 (IVCF…PWVI), 258–278 (IAPF…WLGL), 293–313 (NPEM…FSIA), 317–337 (LPTY…KFGV), 352–372 (GMVN…MEVV), 386–406 (WVLA…CFAL), and 410–430 (YWLL…HALP).

It belongs to the glycosyltransferase 83 family.

It localises to the cell inner membrane. It catalyses the reaction 4-amino-4-deoxy-alpha-L-arabinopyranosyl di-trans,octa-cis-undecaprenyl phosphate + lipid IVA = lipid IIA + di-trans,octa-cis-undecaprenyl phosphate.. Its pathway is lipopolysaccharide metabolism; 4-amino-4-deoxy-beta-L-arabinose-lipid A biosynthesis. Functionally, catalyzes the transfer of the L-Ara4N moiety of the glycolipid undecaprenyl phosphate-alpha-L-Ara4N to lipid A. The modified arabinose is attached to lipid A and is required for resistance to polymyxin and cationic antimicrobial peptides. This is Undecaprenyl phosphate-alpha-4-amino-4-deoxy-L-arabinose arabinosyl transferase (arnT) from Photorhabdus laumondii subsp. laumondii (strain DSM 15139 / CIP 105565 / TT01) (Photorhabdus luminescens subsp. laumondii).